Reading from the N-terminus, the 315-residue chain is Olfactory receptor 5M1 (315 aa).

At 1-25 (MFSPNHTIVTEFILLGLTDDPVLEK) the chain is on the extracellular side. N5 carries an N-linked (GlcNAc...) asparagine glycan. Residues 26–46 (ILFGVFLAIYLITLAGNLCMI) traverse the membrane as a helical segment. Over 47-54 (LLIRTNSH) the chain is Cytoplasmic. Residues 55–75 (LQTPMYFFLGHLSFVDICYSS) form a helical membrane-spanning segment. Residues 76–99 (NVTPNMLHNFLSEQKTISYAGCFT) are Extracellular-facing. C97 and C189 are disulfide-bonded. The helical transmembrane segment at 100-120 (QCLLFIALVITEFYILASMAL) threads the bilayer. Residues 121 to 139 (DRYVAICSPLHYSSRMSKN) are Cytoplasmic-facing. The chain crosses the membrane as a helical span at residues 140-160 (ICVCLVTIPYMYGFLSGFSQS). The Extracellular portion of the chain corresponds to 161-196 (LLTFHLSFCGSLEINHFYCADPPLIMLACSDTRVKK). Residues 197–217 (MAMFVVAGFNLSSSLFIILLS) traverse the membrane as a helical segment. Residues 218 to 237 (YLFIFAAIFRIRSAEGRHKA) are Cytoplasmic-facing. The chain crosses the membrane as a helical span at residues 238–258 (FSTCASHLTIVTLFYGTLFCM). At 259 to 271 (YVRPPSEKSVEES) the chain is on the extracellular side. Residues 272 to 292 (KITAVFYTFLSPMLNPLIYSL) traverse the membrane as a helical segment. Residues 293-315 (RNTDVILAMQQMIRGKSFHKIAV) lie on the Cytoplasmic side of the membrane.

This sequence belongs to the G-protein coupled receptor 1 family.

The protein resides in the cell membrane. Functionally, odorant receptor. This is Olfactory receptor 5M1 (OR5M1) from Homo sapiens (Human).